Reading from the N-terminus, the 411-residue chain is 2,3-bisphosphoglycerate-independent phosphoglycerate mutase (411 aa).

The protein belongs to the BPG-independent phosphoglycerate mutase family. A-PGAM subfamily.

It carries out the reaction (2R)-2-phosphoglycerate = (2R)-3-phosphoglycerate. The protein operates within carbohydrate degradation; glycolysis; pyruvate from D-glyceraldehyde 3-phosphate: step 3/5. Its function is as follows. Catalyzes the interconversion of 2-phosphoglycerate and 3-phosphoglycerate. This chain is 2,3-bisphosphoglycerate-independent phosphoglycerate mutase, found in Methanosphaerula palustris (strain ATCC BAA-1556 / DSM 19958 / E1-9c).